The primary structure comprises 207 residues: Serotype 2 fimbrial subunit (207 aa).

The signal sequence occupies residues Met-1–Ala-26. A disulfide bond links Cys-42 and Cys-85.

Belongs to the fimbrial protein family.

The protein resides in the fimbrium. Bordetella pertussis is the causative agent of whooping cough. An essential step in the disease process is the attachment of the bacteria to the ciliated epithelium of the respiratory tract, enabling the organism to resist normal host-clearance mechanisms. It is unclear which bacterial cell surface component are responsible for adherence but the fimbriae of B.pertussis are prime candidates for being involved in this process. The protein is Serotype 2 fimbrial subunit (fim2) of Bordetella pertussis (strain Tohama I / ATCC BAA-589 / NCTC 13251).